Here is a 473-residue protein sequence, read N- to C-terminus: Photosystem II CP43 reaction center protein (473 aa).

The propeptide occupies 1–14 (MKTLYSLRRFYPVE). Thr-15 is subject to N-acetylthreonine. Phosphothreonine is present on Thr-15. The next 5 helical transmembrane spans lie at 69-93 (LFEVAHFVPEKPMYEQGLILLPHLA), 134-155 (LLGPETLEESFPFFGYVWKDRN), 178-200 (KALYFGGVYDTWAPGGGDVRRIT), 255-275 (KPFAWARRALVWSGEAYLSYS), and 291-312 (WFNNTAYPSEFYGPTGPEASQA). Glu-367 contributes to the [CaMn4O5] cluster binding site. The helical transmembrane segment at 447–471 (RARAAAAGFEKGIDRDFEPVLSMTP) threads the bilayer.

Belongs to the PsbB/PsbC family. PsbC subfamily. In terms of assembly, PSII is composed of 1 copy each of membrane proteins PsbA, PsbB, PsbC, PsbD, PsbE, PsbF, PsbH, PsbI, PsbJ, PsbK, PsbL, PsbM, PsbT, PsbX, PsbY, PsbZ, Psb30/Ycf12, at least 3 peripheral proteins of the oxygen-evolving complex and a large number of cofactors. It forms dimeric complexes. The cofactor is Binds multiple chlorophylls and provides some of the ligands for the Ca-4Mn-5O cluster of the oxygen-evolving complex. It may also provide a ligand for a Cl- that is required for oxygen evolution. PSII binds additional chlorophylls, carotenoids and specific lipids..

Its subcellular location is the plastid. The protein localises to the chloroplast thylakoid membrane. One of the components of the core complex of photosystem II (PSII). It binds chlorophyll and helps catalyze the primary light-induced photochemical processes of PSII. PSII is a light-driven water:plastoquinone oxidoreductase, using light energy to abstract electrons from H(2)O, generating O(2) and a proton gradient subsequently used for ATP formation. The protein is Photosystem II CP43 reaction center protein of Illicium oligandrum (Star anise).